Reading from the N-terminus, the 119-residue chain is Large ribosomal subunit protein uL18 (119 aa).

It belongs to the universal ribosomal protein uL18 family. As to quaternary structure, part of the 50S ribosomal subunit; part of the 5S rRNA/L5/L18/L25 subcomplex. Contacts the 5S and 23S rRNAs.

Its function is as follows. This is one of the proteins that bind and probably mediate the attachment of the 5S RNA into the large ribosomal subunit, where it forms part of the central protuberance. The chain is Large ribosomal subunit protein uL18 from Clostridium botulinum (strain Loch Maree / Type A3).